A 1915-amino-acid polypeptide reads, in one-letter code: Ankyrin repeat domain-containing protein 36A (1915 aa).

ANK repeat units lie at residues Tyr31–Lys60, Lys64–Leu93, Glu97–Ile126, Phe130–Glu159, Cys163–Ala192, and Leu196–Ser225. 5 disordered regions span residues Pro261–Lys331, Ala470–Ser619, Met639–Asp663, Leu676–Ser1203, and Lys1285–Glu1304. Composition is skewed to polar residues over residues Ile262 to Gln272 and Lys297 to Gln306. The segment covering Ser505–Leu521 has biased composition (low complexity). Basic and acidic residues-rich tracts occupy residues Pro551–Ser562 and Pro585–Ser596. Polar residues-rich tracts occupy residues Val597–Ser619 and Gly645–Ala657. 7 stretches are compositionally biased toward basic and acidic residues: residues Arg806–Arg815, Arg874–Arg883, Ser931–Arg951, Arg976–Arg985, Arg1044–Arg1053, Thr1100–Arg1121, and Ile1134–Gln1152. Residues Val1175 to Gln1196 are compositionally biased toward polar residues. Coiled-coil stretches lie at residues Ile1383–Gln1466, Lys1504–Gln1531, Leu1573–Asp1614, and Asn1727–Asp1814. The interval Lys1489 to Leu1508 is disordered.

Belongs to the ANKRD36 family.

This is Ankyrin repeat domain-containing protein 36A (ANKRD36) from Homo sapiens (Human).